Consider the following 283-residue polypeptide: Polyamine aminopropyltransferase (283 aa).

Residues 5-238 (TTWIDEYHKG…GIWSWTFASS (234 aa)) form the PABS domain. Gln-32 is an S-methyl-5'-thioadenosine binding site. Positions 63 and 87 each coordinate spermidine. S-methyl-5'-thioadenosine contacts are provided by residues Glu-107 and 139 to 140 (DG). Asp-158 (proton acceptor) is an active-site residue. 158–161 (DSSD) serves as a coordination point for spermidine.

The protein belongs to the spermidine/spermine synthase family. As to quaternary structure, homodimer or homotetramer.

It is found in the cytoplasm. The catalysed reaction is S-adenosyl 3-(methylsulfanyl)propylamine + putrescine = S-methyl-5'-thioadenosine + spermidine + H(+). The protein operates within amine and polyamine biosynthesis; spermidine biosynthesis; spermidine from putrescine: step 1/1. In terms of biological role, catalyzes the irreversible transfer of a propylamine group from the amino donor S-adenosylmethioninamine (decarboxy-AdoMet) to putrescine (1,4-diaminobutane) to yield spermidine. This is Polyamine aminopropyltransferase from Prochlorococcus marinus (strain MIT 9215).